Here is a 544-residue protein sequence, read N- to C-terminus: Chaperonin GroEL (544 aa).

ATP-binding positions include 29–32 (TLGP), 86–90 (DGTTT), Gly-413, 476–478 (NAA), and Asp-492. The segment at 522-544 (PDPNANNNAAAGANPAAGMGGMM) is disordered. The segment covering 524–538 (PNANNNAAAGANPAA) has biased composition (low complexity).

This sequence belongs to the chaperonin (HSP60) family. As to quaternary structure, forms a cylinder of 14 subunits composed of two heptameric rings stacked back-to-back. Interacts with the co-chaperonin GroES.

The protein localises to the cytoplasm. The enzyme catalyses ATP + H2O + a folded polypeptide = ADP + phosphate + an unfolded polypeptide.. Functionally, together with its co-chaperonin GroES, plays an essential role in assisting protein folding. The GroEL-GroES system forms a nano-cage that allows encapsulation of the non-native substrate proteins and provides a physical environment optimized to promote and accelerate protein folding. The polypeptide is Chaperonin GroEL (Lacticaseibacillus casei (strain BL23) (Lactobacillus casei)).